Here is a 214-residue protein sequence, read N- to C-terminus: Adenylate kinase (214 aa).

10 to 15 (GAGKGT) contributes to the ATP binding site. The interval 30-59 (STGDMLRAAVKAQSELGRQAKALMDAGKLV) is NMP. AMP contacts are provided by residues T31, R36, 57-59 (KLV), 85-88 (GFPR), and Q92. The interval 122–159 (GRRVHAPSGRVYHVKFNPPKQEGKDDVTGELLTSRKDD) is LID. Residues R123 and 132–133 (VY) each bind ATP. AMP is bound by residues R156 and R167. Residue R200 coordinates ATP.

It belongs to the adenylate kinase family. As to quaternary structure, monomer.

It is found in the cytoplasm. It catalyses the reaction AMP + ATP = 2 ADP. It functions in the pathway purine metabolism; AMP biosynthesis via salvage pathway; AMP from ADP: step 1/1. Functionally, catalyzes the reversible transfer of the terminal phosphate group between ATP and AMP. Plays an important role in cellular energy homeostasis and in adenine nucleotide metabolism. The sequence is that of Adenylate kinase from Sodalis glossinidius (strain morsitans).